Reading from the N-terminus, the 432-residue chain is Short/branched chain specific acyl-CoA dehydrogenase, mitochondrial (432 aa).

Residues 1 to 33 (MEGLAVRLLRGSRLLRRNFPTCLSSWKIPPHVS) constitute a mitochondrion transit peptide. Residue K70 is modified to N6-acetyllysine; alternate. K70 bears the N6-succinyllysine; alternate mark. FAD-binding positions include 174–183 (FCLSEAGAGS) and 207–209 (WIS). S183 is a binding site for substrate. S183 is subject to Phosphoserine. The substrate site is built by Y229 and Y283. K284 bears the N6-acetyllysine; alternate mark. K284 is subject to N6-succinyllysine; alternate. Substrate is bound at residue 291–294 (NEGR). FAD is bound by residues R319, Q330, and 387–391 (EWMGG). E414 functions as the Proton acceptor in the catalytic mechanism. 416 to 418 (ASN) provides a ligand contact to FAD. K426 carries the N6-acetyllysine modification.

The protein belongs to the acyl-CoA dehydrogenase family. In terms of assembly, homotetramer. The cofactor is FAD.

It is found in the mitochondrion matrix. It carries out the reaction 2-methylbutanoyl-CoA + oxidized [electron-transfer flavoprotein] + H(+) = (2E)-2-methylbut-2-enoyl-CoA + reduced [electron-transfer flavoprotein]. It catalyses the reaction (2S)-2-methylbutanoyl-CoA + oxidized [electron-transfer flavoprotein] + H(+) = (2E)-2-methylbut-2-enoyl-CoA + reduced [electron-transfer flavoprotein]. The catalysed reaction is (2R)-2-methylbutanoyl-CoA + oxidized [electron-transfer flavoprotein] + H(+) = ethylacryloyl-CoA + reduced [electron-transfer flavoprotein]. The enzyme catalyses butanoyl-CoA + oxidized [electron-transfer flavoprotein] + H(+) = (2E)-butenoyl-CoA + reduced [electron-transfer flavoprotein]. It carries out the reaction 2-methylpropanoyl-CoA + oxidized [electron-transfer flavoprotein] + H(+) = 2-methylpropenoyl-CoA + reduced [electron-transfer flavoprotein]. It catalyses the reaction hexanoyl-CoA + oxidized [electron-transfer flavoprotein] + H(+) = (2E)-hexenoyl-CoA + reduced [electron-transfer flavoprotein]. The catalysed reaction is valproyl-CoA + oxidized [electron-transfer flavoprotein] + H(+) = (2E)-2-propylpent-2-enoyl-CoA + reduced [electron-transfer flavoprotein]. It participates in lipid metabolism; mitochondrial fatty acid beta-oxidation. The protein operates within amino-acid degradation; L-isoleucine degradation. Functionally, short and branched chain specific acyl-CoA dehydrogenase that catalyzes the removal of one hydrogen from C-2 and C-3 of the fatty acyl-CoA thioester, resulting in the formation of trans-2-enoyl-CoA. Among the different mitochondrial acyl-CoA dehydrogenases, acts specifically on short and branched chain acyl-CoA derivatives such as (S)-2-methylbutyryl-CoA as well as short straight chain acyl-CoAs such as butyryl-CoA. Plays an important role in the metabolism of L-isoleucine by catalyzing the dehydrogenation of 2-methylbutyryl-CoA, one of the steps of the L-isoleucine catabolic pathway. Can also act on valproyl-CoA, a metabolite of the valproic acid drug. The chain is Short/branched chain specific acyl-CoA dehydrogenase, mitochondrial (ACADSB) from Pongo abelii (Sumatran orangutan).